A 617-amino-acid polypeptide reads, in one-letter code: MKQSKMPIPTLREMPSDAQVISHALMLRAGYVRQVSAGVYSYLPLANRVIEKAKNIMRQEFEKIGAVEMLAPALLSAELWRESGRYETYGEDLYKLKNREKSDFILGPTHEETFTAIVRDSVKSYKQLPLNLYQIQPKYRDEKRPRNGLLRTREFIMKDAYSFHANYDSLDSVYDEYKAAYERIFTRSGLDFKAIIGDGGAMGGKDSQEFMAITSARTALDRWVVLDKSVVSFDEIPAEVQEEIKAELLKWIVSGEDTIAYSSESSYAANLEMATNEYKPSNRVVAEEEVTRVATPDVKSIDEVAAFLNVPEEQTIKTLFYIADGELVAALLVGNDQLNEVKLKNHLGADFFDVASEEEVANVVQAGFGSLGPVGLPENIKIIADRKVQDVRNAVVGANEDGYHLTGVNPGRDFTAEYVDIREVREGEISPDGQGVLNFARGIEIGHIFKLGTRYSASMGADVLDENGRAVPIIMGCYGIGVSRLLSAVMEQHARLFVNKTPKGEYRYAWGINFPKELAPFDVHLITVNVKDEEAQALTEKLEASLMGAGYEVLTDDRNERVGVKFSDSDLIGLPIRITVGKKATDGIVEVKIKATGDTIEVHADNVLETLEILSKK.

It belongs to the class-II aminoacyl-tRNA synthetase family. ProS type 1 subfamily. As to quaternary structure, homodimer.

The protein resides in the cytoplasm. The catalysed reaction is tRNA(Pro) + L-proline + ATP = L-prolyl-tRNA(Pro) + AMP + diphosphate. Catalyzes the attachment of proline to tRNA(Pro) in a two-step reaction: proline is first activated by ATP to form Pro-AMP and then transferred to the acceptor end of tRNA(Pro). As ProRS can inadvertently accommodate and process non-cognate amino acids such as alanine and cysteine, to avoid such errors it has two additional distinct editing activities against alanine. One activity is designated as 'pretransfer' editing and involves the tRNA(Pro)-independent hydrolysis of activated Ala-AMP. The other activity is designated 'posttransfer' editing and involves deacylation of mischarged Ala-tRNA(Pro). The misacylated Cys-tRNA(Pro) is not edited by ProRS. This is Proline--tRNA ligase from Streptococcus pneumoniae (strain CGSP14).